The primary structure comprises 403 residues: Acetate kinase (403 aa).

Asn7 is a binding site for Mg(2+). Lys14 is an ATP binding site. Arg95 is a binding site for substrate. Asp152 functions as the Proton donor/acceptor in the catalytic mechanism. ATP contacts are provided by residues 212 to 216 (HLGNG), 286 to 288 (DMR), and 335 to 339 (GIGEN). Residue Glu389 coordinates Mg(2+).

This sequence belongs to the acetokinase family. As to quaternary structure, homodimer. Requires Mg(2+) as cofactor. Mn(2+) is required as a cofactor.

It localises to the cytoplasm. It catalyses the reaction acetate + ATP = acetyl phosphate + ADP. The protein operates within metabolic intermediate biosynthesis; acetyl-CoA biosynthesis; acetyl-CoA from acetate: step 1/2. In terms of biological role, catalyzes the formation of acetyl phosphate from acetate and ATP. Can also catalyze the reverse reaction. In Desulfovibrio desulfuricans (strain ATCC 27774 / DSM 6949 / MB), this protein is Acetate kinase.